The following is a 148-amino-acid chain: Aspartate carbamoyltransferase regulatory chain (148 aa).

The Zn(2+) site is built by Cys-106, Cys-111, Cys-134, and Cys-137.

It belongs to the PyrI family. Contains catalytic and regulatory chains. Zn(2+) is required as a cofactor.

In terms of biological role, involved in allosteric regulation of aspartate carbamoyltransferase. This is Aspartate carbamoyltransferase regulatory chain from Methanococcus maripaludis (strain DSM 14266 / JCM 13030 / NBRC 101832 / S2 / LL).